Here is a 777-residue protein sequence, read N- to C-terminus: Double zinc ribbon and ankyrin repeat-containing protein 1 (777 aa).

Positions Gln-161–Phe-176 are enriched in basic and acidic residues. The tract at residues Gln-161–Pro-202 is disordered. A compositionally biased stretch (polar residues) spans Arg-193–Pro-202. Ser-201 carries the post-translational modification Phosphoserine. 2 DZANK-type zinc fingers span residues Cys-230–Cys-289 and Cys-358–Gly-406. ANK repeat units lie at residues Asn-442–Lys-473 and Glu-477–Arg-506.

In terms of assembly, interacts with NINL. Associates with DYNC1H1 and multiple dynein intermediate and light chains as well as actin-binding proteins.

It localises to the cytoplasm. It is found in the cytoskeleton. The protein resides in the microtubule organizing center. The protein localises to the centrosome. Its subcellular location is the cilium basal body. In terms of biological role, involved in vesicle transport in photoreceptor cells. This Macaca fascicularis (Crab-eating macaque) protein is Double zinc ribbon and ankyrin repeat-containing protein 1 (DZANK1).